The following is a 342-amino-acid chain: Trans-3-hydroxy-L-proline dehydratase (342 aa).

The active-site Proton acceptor is the Ser-90. Substrate is bound by residues 91–92, Asp-252, and 257–258; these read GS and GT.

It belongs to the proline racemase family.

The catalysed reaction is trans-3-hydroxy-L-proline = 1-pyrroline-2-carboxylate + H2O. Functionally, catalyzes the dehydration of trans-3-hydroxy-L-proline (t3LHyp) to Delta(1)-pyrroline-2-carboxylate (Pyr2C). Can also catalyze the epimerization of trans-4-hydroxy-L-proline (t4LHyp) to cis-4-hydroxy-D-proline (c4DHyp), albeit with 150-fold lower efficiency. May be involved in the degradation pathway that converts t3LHyp to L-proline, which would allow R.meliloti to grow on t3LHyp as a sole carbon source. Displays no proline racemase activity. The sequence is that of Trans-3-hydroxy-L-proline dehydratase from Rhizobium meliloti (strain 1021) (Ensifer meliloti).